Consider the following 189-residue polypeptide: UPF0301 protein RPR_01165 (189 aa).

This sequence belongs to the UPF0301 (AlgH) family.

In Rickettsia peacockii (strain Rustic), this protein is UPF0301 protein RPR_01165.